The following is a 126-amino-acid chain: SGSCTVKTCWMRLPTFRTVGDFLKDRFDGASRVIYGNKGSNRASRMELHHLEPENPAHKPPSPHDLVYFEKSPNFCTYSGKTGTAGTAGRFCNSTSPALDGCELLCCGRGYRTRTQRVTERCNCTF.

A lipid anchor (O-palmitoleoyl serine; by PORCN) is attached at S1. Residues C92 and C107 are joined by a disulfide bond. 2 N-linked (GlcNAc...) asparagine glycosylation sites follow: N93 and N123.

The protein belongs to the Wnt family. In terms of processing, palmitoleoylation is required for efficient binding to frizzled receptors. Palmitoleoylation is necessary for proper trafficking to cell surface. Depalmitoleoylated by NOTUM, leading to inhibit Wnt signaling pathway.

Its subcellular location is the secreted. It is found in the extracellular space. It localises to the extracellular matrix. In terms of biological role, ligand for members of the frizzled family of seven transmembrane receptors. Acts in the canonical Wnt signaling pathway by promoting beta-catenin-dependent transcriptional activation. Plays an essential role in the development of the embryonic brain and central nervous system (CNS). Has a role in osteoblast function, bone development and bone homeostasis. The chain is Protein Wnt-1 (WNT-1) from Pituophis melanoleucus (Pine snake).